The primary structure comprises 682 residues: NAD(+)--arginine ADP-ribosyltransferase (682 aa).

One can recognise a TR mART core domain in the interval 383 to 614 (KIIRRELRGY…KLIQAEVMTT (232 aa)). Residues Arg478, Ser503, and Glu576 contribute to the active site.

This sequence belongs to the Tevenvirinae NAD(+)--arginine ADP-ribosyltransferase family. In terms of processing, proteolytic cleavages at the N- and C-termini by the prohead core protein protease give rise to the mature enzyme.

It is found in the virion. It carries out the reaction L-arginyl-[protein] + NAD(+) = N(omega)-(ADP-D-ribosyl)-L-arginyl-[protein] + nicotinamide + H(+). Its function is as follows. ADP-ribosyltransferase that efficiently ADP-ribosylates one of the two alpha subunits of host RNA polymerase RPOA on an arginine located in the C-terminal region. ADP-ribosylation of RPOA alpha subunit enhances the transcription of viral early genes. Also ribosylates RPOA subunits beta, beta' and sigma 70 and performs an autoribosylation reaction. Additional in-vitro identified targets include proteins involved in either translation or cellular metabolism such as elongation factor-Tu or GroeL. Mono-ADP-ribosylates host MAZF which may inactivate the latter. In Escherichia coli (Bacteriophage T4), this protein is NAD(+)--arginine ADP-ribosyltransferase (alt).